Consider the following 129-residue polypeptide: MSNVPAELKYSKEHEWLRKEADGTYTVGITEHAQELLGDMVFVDLPEVGATVSAGDDCAVAESVKAASDIYAPVSGEIVAVNDALSDSPELVNSEPYVGGWIFKIKASDESELESLLDATAYEALLEDE.

Residues 24 to 106 (TYTVGITEHA…YVGGWIFKIK (83 aa)) enclose the Lipoyl-binding domain. Residue lysine 65 is modified to N6-lipoyllysine.

Belongs to the GcvH family. The glycine cleavage system is composed of four proteins: P, T, L and H. It depends on (R)-lipoate as a cofactor.

In terms of biological role, the glycine cleavage system catalyzes the degradation of glycine. The H protein shuttles the methylamine group of glycine from the P protein to the T protein. The sequence is that of Glycine cleavage system H protein from Salmonella paratyphi B (strain ATCC BAA-1250 / SPB7).